Consider the following 193-residue polypeptide: dTTP/UTP pyrophosphatase (193 aa).

The active-site Proton acceptor is D77.

Belongs to the Maf family. YhdE subfamily. A divalent metal cation serves as cofactor.

It localises to the cytoplasm. It carries out the reaction dTTP + H2O = dTMP + diphosphate + H(+). The enzyme catalyses UTP + H2O = UMP + diphosphate + H(+). Nucleoside triphosphate pyrophosphatase that hydrolyzes dTTP and UTP. May have a dual role in cell division arrest and in preventing the incorporation of modified nucleotides into cellular nucleic acids. The polypeptide is dTTP/UTP pyrophosphatase (Bacteroides thetaiotaomicron (strain ATCC 29148 / DSM 2079 / JCM 5827 / CCUG 10774 / NCTC 10582 / VPI-5482 / E50)).